A 545-amino-acid chain; its full sequence is CTP synthase (545 aa).

An amidoligase domain region spans residues 1–266 (MTTNYIFVTG…DDLVCARFGI (266 aa)). Position 14 (serine 14) interacts with CTP. UTP is bound at residue serine 14. ATP contacts are provided by residues 15 to 20 (SLGKGI) and aspartate 72. Residues aspartate 72 and glutamate 140 each coordinate Mg(2+). Residues 147 to 149 (DIE), 187 to 192 (KTKPTQ), and lysine 223 each bind CTP. UTP-binding positions include 187–192 (KTKPTQ) and lysine 223. Residue 239 to 241 (KDV) coordinates ATP. The 252-residue stretch at 291–542 (TIGMVGKYIE…IKAAGENARG (252 aa)) folds into the Glutamine amidotransferase type-1 domain. Glycine 352 contributes to the L-glutamine binding site. The Nucleophile; for glutamine hydrolysis role is filled by cysteine 379. L-glutamine-binding positions include 380 to 383 (LGMQ), glutamate 403, and arginine 470. Catalysis depends on residues histidine 515 and glutamate 517.

The protein belongs to the CTP synthase family. In terms of assembly, homotetramer.

The enzyme catalyses UTP + L-glutamine + ATP + H2O = CTP + L-glutamate + ADP + phosphate + 2 H(+). It carries out the reaction L-glutamine + H2O = L-glutamate + NH4(+). It catalyses the reaction UTP + NH4(+) + ATP = CTP + ADP + phosphate + 2 H(+). Its pathway is pyrimidine metabolism; CTP biosynthesis via de novo pathway; CTP from UDP: step 2/2. Its activity is regulated as follows. Allosterically activated by GTP, when glutamine is the substrate; GTP has no effect on the reaction when ammonia is the substrate. The allosteric effector GTP functions by stabilizing the protein conformation that binds the tetrahedral intermediate(s) formed during glutamine hydrolysis. Inhibited by the product CTP, via allosteric rather than competitive inhibition. In terms of biological role, catalyzes the ATP-dependent amination of UTP to CTP with either L-glutamine or ammonia as the source of nitrogen. Regulates intracellular CTP levels through interactions with the four ribonucleotide triphosphates. The sequence is that of CTP synthase from Vibrio vulnificus (strain CMCP6).